Here is a 445-residue protein sequence, read N- to C-terminus: Histamine H3 receptor (445 aa).

Topologically, residues 1-40 are extracellular; sequence MERAPPDGLMNASGALAGEAAAAAGGARTFSAAWTAVLAA. N11 carries N-linked (GlcNAc...) asparagine glycosylation. Residues 41–61 traverse the membrane as a helical segment; that stretch reads LMALLIVATVLGNALVMLAFV. Over 62–71 the chain is Cytoplasmic; that stretch reads ADSSLRTQNN. Residues 72 to 92 traverse the membrane as a helical segment; the sequence is FFLLNLAISDFLVGVFCIPLY. The Extracellular segment spans residues 93–109; that stretch reads VPYVLTGRWTFGRGLCK. C108 and C189 are disulfide-bonded. Residues 110 to 130 form a helical membrane-spanning segment; the sequence is LWLVVDYLLCTSSVFNIVLIS. Topologically, residues 131-157 are cytoplasmic; the sequence is YDRFLSVTRAVSYRAQQGDTRRAVRKM. Residues 158-178 form a helical membrane-spanning segment; sequence VLVWVLAFLLYGPAILSWEYL. Over 179–197 the chain is Extracellular; that stretch reads SGGSSIPEGHCYAEFFYNW. A helical membrane pass occupies residues 198 to 218; sequence YFLITASTLEFFTPFLSVTFF. Residues 219–359 lie on the Cytoplasmic side of the membrane; that stretch reads NLSIYLNIQR…LSRDKKVAKS (141 aa). 2 disordered regions span residues 236 to 264 and 288 to 336; these read GGAR…WGCW and AGEA…LEKR. The segment covering 299 to 312 has biased composition (low complexity); the sequence is AAASPTSSSGSSSR. A helical transmembrane segment spans residues 360–380; it reads LAIIVSIFGLCWAPYTLLMII. Topologically, residues 381–398 are extracellular; sequence RAACHGHCVPDYWYETSF. A helical membrane pass occupies residues 399–419; the sequence is WLLWANSAVNPVLYPLCHYSF. At 420–445 the chain is on the cytoplasmic side; sequence RRAFTKLLCPQKLKVQPHSSLEHCWK. Residue S439 is modified to Phosphoserine.

Belongs to the G-protein coupled receptor 1 family. In terms of tissue distribution, expressed widely and abundantly throughout the brain. Highly expressed in discrete neuronal populations such as pyramidal cells in cerebral cortex or cerebellar Purkinje cells.

Its subcellular location is the cell membrane. The H3 subclass of histamine receptors could mediate the histamine signals in CNS and peripheral nervous system. Signals through the inhibition of adenylate cyclase and displays high constitutive activity (spontaneous activity in the absence of agonist). This is Histamine H3 receptor (HRH3) from Cavia porcellus (Guinea pig).